Consider the following 54-residue polypeptide: Large ribosomal subunit protein bL33A (54 aa).

It belongs to the bacterial ribosomal protein bL33 family.

The sequence is that of Large ribosomal subunit protein bL33A (rpmG1) from Mycobacterium bovis (strain ATCC BAA-935 / AF2122/97).